Reading from the N-terminus, the 125-residue chain is Prefoldin subunit beta (125 aa).

The protein belongs to the prefoldin subunit beta family. As to quaternary structure, heterohexamer of two alpha and four beta subunits.

Its subcellular location is the cytoplasm. Molecular chaperone capable of stabilizing a range of proteins. Seems to fulfill an ATP-independent, HSP70-like function in archaeal de novo protein folding. This chain is Prefoldin subunit beta, found in Halobacterium salinarum (strain ATCC 29341 / DSM 671 / R1).